A 445-amino-acid chain; its full sequence is MSNRKYFGTDGIRGRVGDAPITPDFVLKLGWAAGKVLARHGSRKVIIGKDTRISGYMLESALEAGLAAAGLSALFTGPMPTPAVAYLTRTFRAEAGIVISASHNPFYDNGIKFFSIEGTKLPDEVEEAIEAELEKEISCVDSAELGKASRIVDAAGRYIEFCKGTFPNELSLNGLKIVVDCANGATYHIAPNVLRELGARVVTIGSEPDGLNINEKCGATDVRLLQERVVAEKADLGIAFDGDGDRVIMVDHEGNKVDGDQILYIIAREGLRQGQLRGGAVGTLMSNMGLEVALKQLGIPFARAKVGDRYVLEKMQEKGWRIGAENSGHVILLDKTTTGDGIVAALQVLTAIARNHMSLHDLCSGMKLFPQILVNVRFTPGSGDPLEHDTVKAVTEEVEQALGKRGRVLLRKSGTEPLIRVMVEGENEAQVTEFAHRIADAVKAV.

S102 (phosphoserine intermediate) is an active-site residue. 4 residues coordinate Mg(2+): S102, D241, D243, and D245. S102 is subject to Phosphoserine.

This sequence belongs to the phosphohexose mutase family. It depends on Mg(2+) as a cofactor. Post-translationally, activated by phosphorylation.

It catalyses the reaction alpha-D-glucosamine 1-phosphate = D-glucosamine 6-phosphate. Functionally, catalyzes the conversion of glucosamine-6-phosphate to glucosamine-1-phosphate. The chain is Phosphoglucosamine mutase from Cronobacter sakazakii (strain ATCC BAA-894) (Enterobacter sakazakii).